The chain runs to 58 residues: Amyloid-beta precursor protein (58 aa).

The Extracellular portion of the chain corresponds to 1-34 (ISEVKMDAEFRHDSGYEVHHQKLVFFAEDVGSNK). The Cu(2+) site is built by His12, Tyr16, His19, and His20. Residues His12, Tyr16, His19, and His20 each contribute to the Zn(2+) site. The helical transmembrane segment at 35-58 (GAIIGLMVGGVVIATVIVITLVML) threads the bilayer.

Belongs to the APP family. As to quaternary structure, binds, via its C-terminus, to the PID domain of several cytoplasmic proteins, including APBB family members, the APBA family, MAPK8IP1, SHC1 and NUMB and DAB1. Binding to DAB1 inhibits its serine phosphorylation. Interacts (via NPXY motif) with DAB2 (via PID domain); the interaction is impaired by tyrosine phosphorylation of the NPXY motif. Also interacts with GPCR-like protein BPP, APPBP1, IB1, KNS2 (via its TPR domains), APPBP2 (via BaSS) and DDB1. In vitro, it binds MAPT via the MT-binding domains. Associates with microtubules in the presence of ATP and in a kinesin-dependent manner. Interacts, through a C-terminal domain, with GNAO1. Interacts with CPEB1, ANKS1B and AGER. Interacts with ITM2B. Interacts with ITM2C. Interacts with IDE. Can form homodimers; dimerization is enhanced in the presence of Cu(2+) ions. Can form homodimers; this is promoted by heparin binding. Interacts with SORL1 (via N-terminal ectodomain); this interaction retains APP in the trans-Golgi network and reduces processing into soluble APP-alpha and amyloid-beta peptides. Interacts with PLD3. Interacts with VDAC1. Interacts with NSG1; could regulate APP processing. Amyloid-beta protein 42 interacts with FPR2. Interacts with LRRK2. Interacts (via cytoplasmic domain) with KIF5B. Interacts (via C-terminus) with APBB2/FE65L1 (via C-terminus). Interacts (via intracellular domain) with APBB3. Proteolytically processed under normal cellular conditions. Cleavage either by alpha-secretase, beta-secretase or theta-secretase leads to generation and extracellular release of soluble APP peptides, S-APP-alpha and S-APP-beta, and the retention of corresponding membrane-anchored C-terminal fragments, C80, C83 and C99. Subsequent processing of C80 and C83 by gamma-secretase yields P3 peptides. This is the major secretory pathway and is non-amyloidogenic. Alternatively, presenilin/nicastrin-mediated gamma-secretase processing of C99 releases the amyloid-beta proteins, amyloid-beta protein 40 and amyloid-beta protein 42, major components of amyloid plaques, and the cytotoxic C-terminal fragments, gamma-CTF(50), gamma-CTF(57) and gamma-CTF(59). PSEN1 cleavage is more efficient with C83 than with C99 as substrate (in vitro). Amyloid-beta protein 40 and Amyloid-beta protein 42 are cleaved by ACE. Many other minor amyloid-beta peptides, amyloid-beta 1-X peptides, are found in cerebral spinal fluid (CSF) including the amyloid-beta X-15 peptides, produced from the cleavage by alpha-secretase.

The protein localises to the cell membrane. The protein resides in the membrane. It localises to the perikaryon. Its subcellular location is the cell projection. It is found in the growth cone. The protein localises to the clathrin-coated pit. The protein resides in the early endosome. It localises to the cytoplasmic vesicle. Its subcellular location is the secreted. It is found in the cell surface. The protein localises to the nucleus. The protein resides in the cytoplasm. Its function is as follows. Functions as a cell surface receptor and performs physiological functions on the surface of neurons relevant to neurite growth, neuronal adhesion and axonogenesis. Interaction between APP molecules on neighboring cells promotes synaptogenesis. Involved in cell mobility and transcription regulation through protein-protein interactions. Can promote transcription activation through binding to APBB1-KAT5 and inhibit Notch signaling through interaction with Numb. Couples to apoptosis-inducing pathways such as those mediated by G(o) and JIP. Inhibits G(o)-alpha ATPase activity. Acts as a kinesin I membrane receptor, mediating the axonal transport of beta-secretase and presenilin 1. By acting as a kinesin I membrane receptor, plays a role in axonal anterograde transport of cargo towards synapses in axons. May be involved in copper homeostasis/oxidative stress through copper ion reduction. In vitro, copper-metallated APP induces neuronal death directly or is potentiated through Cu(2+)-mediated low-density lipoprotein oxidation. Can regulate neurite outgrowth through binding to components of the extracellular matrix such as heparin and collagen I and IV. Induces a AGER-dependent pathway that involves activation of p38 MAPK, resulting in internalization of amyloid-beta peptide and mitochondrial dysfunction in cultured cortical neurons. Provides Cu(2+) ions for GPC1 which are required for release of nitric oxide (NO) and subsequent degradation of the heparan sulfate chains on GPC1. This Canis lupus familiaris (Dog) protein is Amyloid-beta precursor protein (APP).